Reading from the N-terminus, the 118-residue chain is Large ribosomal subunit protein bL20 (118 aa).

The protein belongs to the bacterial ribosomal protein bL20 family.

In terms of biological role, binds directly to 23S ribosomal RNA and is necessary for the in vitro assembly process of the 50S ribosomal subunit. It is not involved in the protein synthesizing functions of that subunit. The chain is Large ribosomal subunit protein bL20 from Campylobacter curvus (strain 525.92).